The primary structure comprises 1070 residues: Regulator of Ty1 transposition protein 107 (1070 aa).

4 consecutive BRCT domains span residues 2–103 (STSL…QDSV), 117–213 (NPFH…LYHF), 260–352 (HPNK…FYMF), and 369–453 (PFHA…EQCY). Ser304 bears the Phosphoserine mark. A Phosphothreonine modification is found at Thr532. Residues 572-659 (SRASFPVVDS…LQVQLGQRTK (88 aa)) form a disordered region. The span at 580–592 (DSKKSNLQKKDSN) shows a compositional bias: basic and acidic residues. Residues Ser591 and Ser593 each carry the phosphoserine modification. Composition is skewed to basic and acidic residues over residues 603 to 615 (CEGHEKREEKEFT) and 622 to 645 (DAPKKQEIREQSRKKNDIDYKKEE). Ser720 carries the post-translational modification Phosphoserine. Basic and acidic residues predominate over residues 722 to 731 (NDDHINDEKP). Residues 722-753 (NDDHINDEKPAVNSKYTTPKTSQNITSGVDTP) form a disordered region. Polar residues predominate over residues 735–753 (SKYTTPKTSQNITSGVDTP). 2 positions are modified to phosphoserine: Ser800 and Ser806. 2 BRCT domains span residues 829–910 (FNEL…IDLL) and 934–1049 (GINE…CVES).

Forms a complex with the cullin-RING ligase (CRL) RTT101(MMS1-MMS22). Interacts with MMS22 and RTT101. Interacts with histone H2A; requires H2A to be phosphorylated (gamma-H2A). Interacts with RAD55. Phosphorylated by MEC1.

It localises to the nucleus. Its function is as follows. Required for resumption of chromosome replication after DNA damage, specifically in S phase. Is recruited to chromatin in the presence of RTT109 and RTT101 in response to stalled replication forks and acts as a scaffold during DNA repair. The polypeptide is Regulator of Ty1 transposition protein 107 (RTT107) (Saccharomyces cerevisiae (strain ATCC 204508 / S288c) (Baker's yeast)).